Reading from the N-terminus, the 728-residue chain is 1,4-alpha-glucan branching enzyme GlgB (728 aa).

The active-site Nucleophile is the D405. Residue E458 is the Proton donor of the active site.

It belongs to the glycosyl hydrolase 13 family. GlgB subfamily. In terms of assembly, monomer.

The catalysed reaction is Transfers a segment of a (1-&gt;4)-alpha-D-glucan chain to a primary hydroxy group in a similar glucan chain.. Its pathway is glycan biosynthesis; glycogen biosynthesis. Its function is as follows. Catalyzes the formation of the alpha-1,6-glucosidic linkages in glycogen by scission of a 1,4-alpha-linked oligosaccharide from growing alpha-1,4-glucan chains and the subsequent attachment of the oligosaccharide to the alpha-1,6 position. This chain is 1,4-alpha-glucan branching enzyme GlgB, found in Shigella flexneri.